Consider the following 276-residue polypeptide: Pantothenate synthetase (276 aa).

M27 to H34 contacts ATP. Residue H34 is the Proton donor of the active site. Q58 serves as a coordination point for (R)-pantoate. Q58 lines the beta-alanine pocket. G147–D150 serves as a coordination point for ATP. (R)-pantoate is bound at residue Q153. ATP-binding positions include A176 and L184 to R187.

It belongs to the pantothenate synthetase family. In terms of assembly, homodimer.

It localises to the cytoplasm. It carries out the reaction (R)-pantoate + beta-alanine + ATP = (R)-pantothenate + AMP + diphosphate + H(+). The protein operates within cofactor biosynthesis; (R)-pantothenate biosynthesis; (R)-pantothenate from (R)-pantoate and beta-alanine: step 1/1. Its function is as follows. Catalyzes the condensation of pantoate with beta-alanine in an ATP-dependent reaction via a pantoyl-adenylate intermediate. The polypeptide is Pantothenate synthetase (Helicobacter pylori (strain P12)).